A 300-amino-acid polypeptide reads, in one-letter code: Ribosome-inactivating protein 3 (300 aa).

Glu207 is an active-site residue.

This sequence belongs to the ribosome-inactivating protein family. Type 1 RIP subfamily. As to quaternary structure, monomer. Accumulates to high levels in seeds.

It is found in the cytoplasm. It catalyses the reaction Endohydrolysis of the N-glycosidic bond at one specific adenosine on the 28S rRNA.. Functionally, possesses features of some constitutive defense agent. The coordinate Opaque-2-controlled synthesis of this protein and the major seed storage proteins (zeins) may provide the germinating seedling with both nutritional benefits and protection against pathogen invasion of the surrounding endosperm. The chain is Ribosome-inactivating protein 3 (CRIP3) from Zea mays (Maize).